Consider the following 984-residue polypeptide: Probable translation initiation factor IF-2 (984 aa).

Residues 94–215 enclose the DOD-type homing endonuclease domain; the sequence is VNGWYSVTVT…LPLLLLRFGI (122 aa). A tr-type G domain is found at 391–608; sequence TTETHNFVAN…LIAGLSQKYL (218 aa). Residues 464–468 and 518–521 each bind GTP; these read DTPGH and NKID.

This sequence belongs to the TRAFAC class translation factor GTPase superfamily. Classic translation factor GTPase family. IF-2 subfamily. This protein undergoes a protein self splicing that involves a post-translational excision of the intervening region (intein) followed by peptide ligation.

Function in general translation initiation by promoting the binding of the formylmethionine-tRNA to ribosomes. Seems to function along with eIF-2. In Pyrococcus furiosus (strain ATCC 43587 / DSM 3638 / JCM 8422 / Vc1), this protein is Probable translation initiation factor IF-2 (infB).